A 457-amino-acid chain; its full sequence is Proton-translocating ferredoxin:NAD(+) oxidoreductase complex subunit C (457 aa).

2 4Fe-4S ferredoxin-type domains span residues 353 to 386 (TKNDVNDGKESSCIRCGRCLKACPMHLNPSMLSI) and 396 to 427 (AKEEYNLLDCVECGSCVYTCPAKRKIVQYIRY). [4Fe-4S] cluster is bound by residues Cys365, Cys368, Cys371, Cys375, Cys405, Cys408, Cys411, and Cys415. A disordered region spans residues 433 to 457 (RAAGEREKAKAAKAKEKKEKEEVLK).

It belongs to the 4Fe4S bacterial-type ferredoxin family. RnfC subfamily. The complex is composed of six subunits: RnfA, RnfB, RnfC, RnfD, RnfE and RnfG. [4Fe-4S] cluster is required as a cofactor.

It localises to the cell membrane. In terms of biological role, part of a membrane-bound complex that couples electron transfer with translocation of ions across the membrane. Couples electron transfer from reduced ferredoxin to NAD(+) with translocation of H(+) out of the cell. Essential for energy conservation during autotrophic growth. Contributes to ATP synthesis during heterotrophic growth. This chain is Proton-translocating ferredoxin:NAD(+) oxidoreductase complex subunit C, found in Clostridium ljungdahlii (strain ATCC 55383 / DSM 13528 / PETC).